The chain runs to 249 residues: Aspartate/glutamate leucyltransferase (249 aa).

The protein belongs to the R-transferase family. Bpt subfamily.

Its subcellular location is the cytoplasm. The catalysed reaction is N-terminal L-glutamyl-[protein] + L-leucyl-tRNA(Leu) = N-terminal L-leucyl-L-glutamyl-[protein] + tRNA(Leu) + H(+). It carries out the reaction N-terminal L-aspartyl-[protein] + L-leucyl-tRNA(Leu) = N-terminal L-leucyl-L-aspartyl-[protein] + tRNA(Leu) + H(+). In terms of biological role, functions in the N-end rule pathway of protein degradation where it conjugates Leu from its aminoacyl-tRNA to the N-termini of proteins containing an N-terminal aspartate or glutamate. In Brucella abortus (strain 2308), this protein is Aspartate/glutamate leucyltransferase.